The sequence spans 392 residues: Spermatogenesis associated 6-like protein (392 aa).

Phosphoserine is present on residues Ser260 and Ser263. The span at Ser286–Gln301 shows a compositional bias: low complexity. The disordered stretch occupies residues Ser286–Asp305.

Belongs to the SPATA6 family.

In Homo sapiens (Human), this protein is Spermatogenesis associated 6-like protein (SPATA6L).